A 39-amino-acid chain; its full sequence is Contryphan-Cal4 (39 aa).

The first 20 residues, 1 to 20 (MTRTAVLLLTLLFLVAMAAS), serve as a signal peptide directing secretion. Residues cysteine 29 and cysteine 35 are joined by a disulfide bond.

Expressed by the venom duct.

The protein localises to the secreted. In terms of biological role, probable neurotoxin. This chain is Contryphan-Cal4, found in Californiconus californicus (California cone).